Consider the following 96-residue polypeptide: Large ribosomal subunit protein eL43 (96 aa).

The C4-type zinc-finger motif lies at 41-62 (CPVCAFPKLKRAGTSIWVCDKC).

The protein belongs to the eukaryotic ribosomal protein eL43 family. Requires Zn(2+) as cofactor.

The sequence is that of Large ribosomal subunit protein eL43 from Methanococcus vannielii (strain ATCC 35089 / DSM 1224 / JCM 13029 / OCM 148 / SB).